The primary structure comprises 677 residues: Zinc finger protein 526 (677 aa).

C2H2-type zinc fingers lie at residues 57 to 79 (FMCS…QEQH), 109 to 131 (FQCG…QDAH), and 141 to 164 (YQCG…KAQH). The tract at residues 167–190 (TAAAKPPVPPPLPPVTPPPPPPAP) is disordered. Over residues 172–190 (PPVPPPLPPVTPPPPPPAP) the composition is skewed to pro residues. A C2H2-type 4 zinc finger spans residues 198 to 220 (YECPECSTLCTTPEEFLEHQGTH). A compositionally biased stretch (basic and acidic residues) spans 223–232 (SLEKEEHNGL). Residues 223–300 (SLEKEEHNGL…RRASHGPASA (78 aa)) form a disordered region. Residues 233–257 (EEEEEDDEDDNEETEEEEEAAAEVG) are compositionally biased toward acidic residues. 4 C2H2-type zinc fingers span residues 304-326 (FYCS…GRAH), 331-353 (HECT…LRLH), 359-381 (YLCV…RRAH), and 387-408 (HRCR…RRTH). The interval 408-449 (HAGKSGAPPSAAPPTVASAVASLAPAEPTPPPPAPPTPPAQL) is disordered. Residues 410 to 433 (GKSGAPPSAAPPTVASAVASLAPA) are compositionally biased toward low complexity. Residues 434–449 (EPTPPPPAPPTPPAQL) are compositionally biased toward pro residues. 5 C2H2-type zinc fingers span residues 449 to 472 (LPCP…RAVH), 479 to 501 (HRCG…LRTH), 507 to 529 (FQCH…QLTH), 535 to 557 (YQCL…RRLH), and 580 to 602 (YYCG…QRVH). The segment at 608–627 (LTLQPPRSPPPAPPPPPEPQ) is disordered. Residues 613-626 (PRSPPPAPPPPPEP) are compositionally biased toward pro residues.

Belongs to the krueppel C2H2-type zinc-finger protein family.

Its subcellular location is the nucleus. Its function is as follows. May be involved in transcriptional regulation. The polypeptide is Zinc finger protein 526 (ZNF526) (Bos taurus (Bovine)).